Here is a 474-residue protein sequence, read N- to C-terminus: Cysteine--tRNA ligase (474 aa).

Zn(2+) is bound at residue Cys27. A 'HIGH' region motif is present at residues 29 to 39 (PTVYNYIHIGN). Residues Cys212, His237, and Glu241 each coordinate Zn(2+). The short motif at 271–275 (KMSKS) is the 'KMSKS' region element. Lys274 is a binding site for ATP.

This sequence belongs to the class-I aminoacyl-tRNA synthetase family. Monomer. It depends on Zn(2+) as a cofactor.

Its subcellular location is the cytoplasm. It carries out the reaction tRNA(Cys) + L-cysteine + ATP = L-cysteinyl-tRNA(Cys) + AMP + diphosphate. This chain is Cysteine--tRNA ligase, found in Lactobacillus delbrueckii subsp. bulgaricus (strain ATCC 11842 / DSM 20081 / BCRC 10696 / JCM 1002 / NBRC 13953 / NCIMB 11778 / NCTC 12712 / WDCM 00102 / Lb 14).